We begin with the raw amino-acid sequence, 66 residues long: Large ribosomal subunit protein bL35 (66 aa).

The span at 1 to 14 shows a compositional bias: basic residues; that stretch reads MPKMKTKSAAKKRF. A disordered region spans residues 1 to 34; the sequence is MPKMKTKSAAKKRFSMTATGKVKAGPAGKRHGMI.

This sequence belongs to the bacterial ribosomal protein bL35 family.

This is Large ribosomal subunit protein bL35 from Paracoccus denitrificans (strain Pd 1222).